The chain runs to 402 residues: MAKRSLASLNAGDLSGKRVLVRVDFNVPLNEAGAITDDTRIRAALPTINDLIGKGAKVILSAHFGRPKGQVNDAMRLTPVAARLSELLGKPVAKTDSCIGPDAEAKVNAMADGDVVLLENVRFFAEEEKNDAGFAEKLAGLAEVYVNDAFGAAHRAHASTEGVTKFLKPAVAGFLMEKELQYLQGAVDEPKRPLAAIVGGSKVSSKIGVLEALIDKCDKVLIGGGMIFTFYKARGLSVGKSLVEEDKLELAKELEAKAKAKGVELLLPTDVVLADNFAPDANSQVADVTAIPDGWMGLDIGPDAVKVFQDALGDCQTVIWNGPMGVFEFEKFATGTNAIATTLAELSGKGCCTIIGGGDSVAAVEKAGLADKMSHISTGGGASLELLEGKVLPGVAALNDAA.

Residues 24–26 (DFN), Arg40, 63–66 (HFGR), Arg122, and Arg155 contribute to the substrate site. ATP contacts are provided by residues Lys206, Gly297, Glu328, and 357–360 (GGDS).

The protein belongs to the phosphoglycerate kinase family. In terms of assembly, monomer.

Its subcellular location is the cytoplasm. The enzyme catalyses (2R)-3-phosphoglycerate + ATP = (2R)-3-phospho-glyceroyl phosphate + ADP. The protein operates within carbohydrate degradation; glycolysis; pyruvate from D-glyceraldehyde 3-phosphate: step 2/5. The chain is Phosphoglycerate kinase from Parasynechococcus marenigrum (strain WH8102).